A 384-amino-acid polypeptide reads, in one-letter code: Chaperone protein DnaJ (384 aa).

Residues 4–68 (DFYEILGVSR…EKRQMYDQMG (65 aa)) enclose the J domain. Disordered stretches follow at residues 29–60 (REYH…DEEK) and 73–131 (EQAE…GQDL). Residues 42 to 60 (EEKFKQAKKAKEVLTDEEK) show a composition bias toward basic and acidic residues. Gly residues predominate over residues 80–101 (GAGGGGGRGGMGGDPFGGGAGG). Over residues 102–111 (FDMQDIFDQF) the composition is skewed to low complexity. The span at 112–121 (FGGGGRGGRG) shows a compositional bias: gly residues. The CR-type zinc-finger motif lies at 145–227 (GATKQLNVTR…CRGNGVVQND (83 aa)). C158, C161, C175, and C178 together coordinate Zn(2+). CXXCXGXG motif repeat units lie at residues 158 to 165 (CDDCDGAG), 175 to 182 (CPECNGQG), 201 to 208 (CRRCDGEG), and 215 to 222 (CSTCRGNG). The segment at 160-191 (DCDGAGHPPGADSETCPECNGQGQTTQVQQTP) is disordered. Over residues 180–190 (GQGQTTQVQQT) the composition is skewed to low complexity. The Zn(2+) site is built by C201, C204, C215, and C218.

It belongs to the DnaJ family. In terms of assembly, homodimer. It depends on Zn(2+) as a cofactor.

The protein localises to the cytoplasm. Its function is as follows. Participates actively in the response to hyperosmotic and heat shock by preventing the aggregation of stress-denatured proteins and by disaggregating proteins, also in an autonomous, DnaK-independent fashion. Unfolded proteins bind initially to DnaJ; upon interaction with the DnaJ-bound protein, DnaK hydrolyzes its bound ATP, resulting in the formation of a stable complex. GrpE releases ADP from DnaK; ATP binding to DnaK triggers the release of the substrate protein, thus completing the reaction cycle. Several rounds of ATP-dependent interactions between DnaJ, DnaK and GrpE are required for fully efficient folding. Also involved, together with DnaK and GrpE, in the DNA replication of plasmids through activation of initiation proteins. The polypeptide is Chaperone protein DnaJ (Haloarcula marismortui (strain ATCC 43049 / DSM 3752 / JCM 8966 / VKM B-1809) (Halobacterium marismortui)).